The following is a 414-amino-acid chain: Glucose-1-phosphate adenylyltransferase (414 aa).

Alpha-D-glucose 1-phosphate is bound by residues Gly-164, 181-182 (EK), and Ser-199.

Belongs to the bacterial/plant glucose-1-phosphate adenylyltransferase family. In terms of assembly, homotetramer.

The enzyme catalyses alpha-D-glucose 1-phosphate + ATP + H(+) = ADP-alpha-D-glucose + diphosphate. It functions in the pathway glycan biosynthesis; glycogen biosynthesis. Its function is as follows. Involved in the biosynthesis of ADP-glucose, a building block required for the elongation reactions to produce glycogen. Catalyzes the reaction between ATP and alpha-D-glucose 1-phosphate (G1P) to produce pyrophosphate and ADP-Glc. The sequence is that of Glucose-1-phosphate adenylyltransferase from Leifsonia xyli subsp. xyli (strain CTCB07).